Here is a 568-residue protein sequence, read N- to C-terminus: Zinc finger protein 648 (568 aa).

The span at 1-11 (MAQVDSQDRWG) shows a compositional bias: basic and acidic residues. The segment at 1–106 (MAQVDSQDRW…MSGKASWSRD (106 aa)) is disordered. C2H2-type zinc fingers lie at residues 279–301 (YACE…RRLH), 307–329 (YQCS…IRTH), 335–358 (YPCP…RNMH), 364–386 (FPCS…QRTH), 392–414 (FRCP…QRVH), 420–442 (FPCP…QTLH), 448–470 (FKCA…QRIH), 476–498 (FPCT…QQIH), 504–526 (FLCA…IRMH), and 532–554 (YQCE…RAKH). The tract at residues 548–568 (QRHRAKHGTCKKEPIPSSSDE) is disordered.

It belongs to the krueppel C2H2-type zinc-finger protein family.

It localises to the nucleus. Functionally, may be involved in transcriptional regulation. The protein is Zinc finger protein 648 (ZNF648) of Homo sapiens (Human).